A 368-amino-acid polypeptide reads, in one-letter code: Flagellar P-ring protein (368 aa).

An N-terminal signal peptide occupies residues 1-22; the sequence is MLIPLARAVLALELLGAGAAHA.

The protein belongs to the FlgI family. The basal body constitutes a major portion of the flagellar organelle and consists of four rings (L,P,S, and M) mounted on a central rod.

It is found in the periplasm. The protein resides in the bacterial flagellum basal body. Its function is as follows. Assembles around the rod to form the L-ring and probably protects the motor/basal body from shearing forces during rotation. In Bordetella pertussis (strain Tohama I / ATCC BAA-589 / NCTC 13251), this protein is Flagellar P-ring protein.